We begin with the raw amino-acid sequence, 159 residues long: Large ribosomal subunit protein uL11 (159 aa).

This sequence belongs to the universal ribosomal protein uL11 family. Part of the ribosomal stalk of the 50S ribosomal subunit. Interacts with L10 and the large rRNA to form the base of the stalk. L10 forms an elongated spine to which L12 dimers bind in a sequential fashion forming a multimeric L10(L12)X complex.

Forms part of the ribosomal stalk which helps the ribosome interact with GTP-bound translation factors. This Methanococcus vannielii (strain ATCC 35089 / DSM 1224 / JCM 13029 / OCM 148 / SB) protein is Large ribosomal subunit protein uL11.